The primary structure comprises 374 residues: Chaperone protein DnaJ (374 aa).

One can recognise a J domain in the interval 4–68 (DYYDILGVSR…ETRARYDRFG (65 aa)). A CR-type zinc finger spans residues 133–215 (GGEKQIRITH…CGGNGQAQVT (83 aa)). 8 residues coordinate Zn(2+): Cys-146, Cys-149, Cys-163, Cys-166, Cys-189, Cys-192, Cys-203, and Cys-206. CXXCXGXG motif repeat units follow at residues 146 to 153 (CTTCNGSG), 163 to 170 (CGTCGGAG), 189 to 196 (CPTCNGKG), and 203 to 210 (CETCGGNG).

The protein belongs to the DnaJ family. In terms of assembly, homodimer. The cofactor is Zn(2+).

The protein resides in the cytoplasm. Participates actively in the response to hyperosmotic and heat shock by preventing the aggregation of stress-denatured proteins and by disaggregating proteins, also in an autonomous, DnaK-independent fashion. Unfolded proteins bind initially to DnaJ; upon interaction with the DnaJ-bound protein, DnaK hydrolyzes its bound ATP, resulting in the formation of a stable complex. GrpE releases ADP from DnaK; ATP binding to DnaK triggers the release of the substrate protein, thus completing the reaction cycle. Several rounds of ATP-dependent interactions between DnaJ, DnaK and GrpE are required for fully efficient folding. Also involved, together with DnaK and GrpE, in the DNA replication of plasmids through activation of initiation proteins. The sequence is that of Chaperone protein DnaJ from Cyanothece sp. (strain PCC 7425 / ATCC 29141).